The following is a 736-amino-acid chain: DNA topoisomerase 1 (736 aa).

One can recognise a Toprim domain in the interval 2–113; the sequence is KHLIIVESPA…SYPRIVFHEI (112 aa). Residues glutamate 8 and aspartate 82 each coordinate Mg(2+). Positions 129 to 552 constitute a Topo IA-type catalytic domain; it reads DMSKVNAQQA…DFYYPFMDKI (424 aa). Positions 163 to 168 are interaction with DNA; the sequence is SAGRVQ. Tyrosine 297 (O-(5'-phospho-DNA)-tyrosine intermediate) is an active-site residue. 4 consecutive C4-type zinc fingers follow at residues 572 to 598, 616 to 642, 663 to 689, and 702 to 725; these read CPKC…YPKC, CEKC…YPEC, CPEC…YPKC, and CEKC…CIKC.

The protein belongs to the type IA topoisomerase family. Monomer. Mg(2+) is required as a cofactor.

It carries out the reaction ATP-independent breakage of single-stranded DNA, followed by passage and rejoining.. Functionally, releases the supercoiling and torsional tension of DNA, which is introduced during the DNA replication and transcription, by transiently cleaving and rejoining one strand of the DNA duplex. Introduces a single-strand break via transesterification at a target site in duplex DNA. The scissile phosphodiester is attacked by the catalytic tyrosine of the enzyme, resulting in the formation of a DNA-(5'-phosphotyrosyl)-enzyme intermediate and the expulsion of a 3'-OH DNA strand. The free DNA strand then undergoes passage around the unbroken strand, thus removing DNA supercoils. Finally, in the religation step, the DNA 3'-OH attacks the covalent intermediate to expel the active-site tyrosine and restore the DNA phosphodiester backbone. The sequence is that of DNA topoisomerase 1 from Helicobacter pylori (strain ATCC 700392 / 26695) (Campylobacter pylori).